Reading from the N-terminus, the 337-residue chain is Adenylosuccinate synthetase (337 aa).

Residues 12 to 18 (GDEGKGK) and 42 to 44 (GHT) each bind GTP. Residue Asp-13 is the Proton acceptor of the active site. Residues Asp-13 and Gly-42 each contribute to the Mg(2+) site. Residues 13–16 (DEGK), 40–43 (NAGH), Thr-127, Arg-141, Gln-179, Thr-194, and Arg-256 contribute to the IMP site. Residue His-43 is the Proton donor of the active site. Residue 252-258 (TVTGRRR) participates in substrate binding. GTP contacts are provided by residues Arg-258, 284 to 286 (CLD), and 324 to 326 (STG).

It belongs to the adenylosuccinate synthetase family. Homodimer. It depends on Mg(2+) as a cofactor.

Its subcellular location is the cytoplasm. The enzyme catalyses IMP + L-aspartate + GTP = N(6)-(1,2-dicarboxyethyl)-AMP + GDP + phosphate + 2 H(+). It functions in the pathway purine metabolism; AMP biosynthesis via de novo pathway; AMP from IMP: step 1/2. Functionally, plays an important role in the de novo pathway of purine nucleotide biosynthesis. Catalyzes the first committed step in the biosynthesis of AMP from IMP. In Methanococcus maripaludis (strain C6 / ATCC BAA-1332), this protein is Adenylosuccinate synthetase.